Reading from the N-terminus, the 1534-residue chain is Ribosome-binding protein 1 (1534 aa).

At Met1–Gln7 the chain is on the lumenal side. A helical membrane pass occupies residues Thr8–Val28. Residues Ser29–Val1534 lie on the Cytoplasmic side of the membrane. Disordered regions lie at residues Gln45–Asn91 and Pro125–Ala152. The segment covering Thr52–Glu63 has biased composition (basic residues). Residues Lys64 to Pro88 show a composition bias toward basic and acidic residues. Positions Pro125–Ser135 are enriched in low complexity. Lys148 is covalently cross-linked (Glycyl lysine isopeptide (Lys-Gly) (interchain with G-Cter in SUMO2)). Phosphoserine occurs at positions 159 and 165. 3 disordered regions span residues Ala173–Leu780, Lys968–Leu987, and Arg1021–Asn1082. Residues Lys175–Thr194 show a composition bias toward low complexity. 54 consecutive repeat copies span residues Ala197 to Gln206, Asn207 to Pro216, Asn217 to Leu226, Asn227 to Gln236, Asn237 to Pro246, Asn247 to Gln256, Asn257 to Gln266, Asn267 to Pro276, Asn277 to Pro286, Asn287 to Pro296, Asn297 to Pro306, Asn307 to Gln316, Asn317 to Pro326, Asn327 to Gln336, Asn337 to Gln346, Asn347 to Pro356, Asn357 to Pro366, Asn367 to Pro376, Asn377 to Pro386, Asn387 to Gln396, Asn397 to Gln406, Asn407 to Gln416, Asn417 to Ser426, Ser427 to Pro436, Asn437 to Pro446, Asn447 to Gln456, Asn457 to Pro466, Asn467 to Gln476, Asn477 to Ser486, Asn487 to Gln496, Asn497 to Pro506, Asn507 to Gln516, Asn517 to Pro526, Asn527 to Gln536, Asn537 to Pro546, Asn547 to Pro556, Asn557 to Pro566, Asn567 to Pro576, Asn577 to Pro586, Asn587 to Pro596, Asn597 to Pro606, Asn607 to Pro616, Asn617 to Pro626, Asn627 to Pro636, Asn637 to Pro646, Asn647 to Gln656, Asn657 to Pro666, Asn667 to Ala676, Asn677 to Ala686, Gly687 to Pro696, Asn697 to Pro706, Asn707 to Pro716, Asn717 to Ala726, and Asn727 to Pro736. A 54 X 10 AA tandem repeats of [NASG]-[QL]-[GS]-[KRT]-[KR]-[AVTSEG]-[ED]-[AGVLS]-[ATGSV]-[PQLSA] region spans residues Ala197 to Pro736. Thr275 is modified (phosphothreonine). The segment covering Ala395–Gln428 has biased composition (polar residues). Residues Gly474–Gly499 show a composition bias toward polar residues. Polar residues predominate over residues Thr705–Gln718. Residue Ser715 is modified to Phosphoserine. Ser747 is modified (phosphoserine). A Glycyl lysine isopeptide (Lys-Gly) (interchain with G-Cter in SUMO1) cross-link involves residue Lys752. Ser1032 carries the phosphoserine modification. The span at Ala1059–Ala1080 shows a compositional bias: basic and acidic residues. N6-acetyllysine is present on Lys1064. A phosphoserine mark is found at Ser1091 and Ser1110. 3 disordered regions span residues Glu1224–Asn1251, Lys1391–Lys1416, and Glu1509–Val1534. Over residues Glu1509–Ser1528 the composition is skewed to basic and acidic residues.

The protein localises to the endoplasmic reticulum membrane. In terms of biological role, acts as a ribosome receptor and mediates interaction between the ribosome and the endoplasmic reticulum membrane. The chain is Ribosome-binding protein 1 (RRBP1) from Canis lupus familiaris (Dog).